We begin with the raw amino-acid sequence, 494 residues long: DNA-directed DNA/RNA polymerase mu (494 aa).

The interval 1 to 24 is disordered; the sequence is MLPKRRRARVGSPSGDAASSTPPS. At serine 12 the chain carries Phosphoserine. The BRCT domain maps to 22–122; it reads PPSTRFPGVA…QPVPVECRHR (101 aa). The interval 323–332 is involved in ssDNA binding; it reads RGKLQGHDVD. The Mg(2+) site is built by aspartate 330, aspartate 332, and aspartate 418.

This sequence belongs to the DNA polymerase type-X family. Mg(2+) serves as cofactor. In terms of tissue distribution, expressed in a number of tissues. Abundant in thymus.

It localises to the nucleus. It carries out the reaction DNA(n) + a 2'-deoxyribonucleoside 5'-triphosphate = DNA(n+1) + diphosphate. In terms of biological role, gap-filling polymerase involved in repair of DNA double-strand breaks by non-homologous end joining (NHEJ). Participates in immunoglobulin (Ig) light chain gene rearrangement in V(D)J recombination. In Homo sapiens (Human), this protein is DNA-directed DNA/RNA polymerase mu (POLM).